Reading from the N-terminus, the 376-residue chain is Putative peptide import ATP-binding protein BMEII0205 (376 aa).

Residues 1-25 (MPLRPALHLRTGKLRQTPTHNEPDG) are disordered. Residues 64–314 (VRTDDLVRDF…PLHPYSRALL (251 aa)) enclose the ABC transporter domain. An ATP-binding site is contributed by 106–113 (GESGSGKS).

Belongs to the ABC transporter superfamily. The complex is composed of two ATP-binding proteins (BMEII0205 and BMEII0206), two transmembrane proteins (BMEII0207/BMEII0208 and BMEII0209) and a solute-binding protein (BMEII0210).

The protein localises to the cell inner membrane. Functionally, probably part of an ABC transporter complex that could be involved in peptide import. Probably responsible for energy coupling to the transport system. The polypeptide is Putative peptide import ATP-binding protein BMEII0205 (Brucella melitensis biotype 1 (strain ATCC 23456 / CCUG 17765 / NCTC 10094 / 16M)).